Reading from the N-terminus, the 640-residue chain is 1-deoxy-D-xylulose-5-phosphate synthase (640 aa).

Residues His-72 and 113-115 (GHA) contribute to the thiamine diphosphate site. Residue Asp-144 coordinates Mg(2+). Thiamine diphosphate contacts are provided by residues 145–146 (GA), Asn-174, Tyr-287, and Glu-370. Mg(2+) is bound at residue Asn-174.

Belongs to the transketolase family. DXPS subfamily. Homodimer. The cofactor is Mg(2+). It depends on thiamine diphosphate as a cofactor.

The catalysed reaction is D-glyceraldehyde 3-phosphate + pyruvate + H(+) = 1-deoxy-D-xylulose 5-phosphate + CO2. The protein operates within metabolic intermediate biosynthesis; 1-deoxy-D-xylulose 5-phosphate biosynthesis; 1-deoxy-D-xylulose 5-phosphate from D-glyceraldehyde 3-phosphate and pyruvate: step 1/1. Functionally, catalyzes the acyloin condensation reaction between C atoms 2 and 3 of pyruvate and glyceraldehyde 3-phosphate to yield 1-deoxy-D-xylulose-5-phosphate (DXP). The protein is 1-deoxy-D-xylulose-5-phosphate synthase of Synechocystis sp. (strain ATCC 27184 / PCC 6803 / Kazusa).